A 419-amino-acid chain; its full sequence is L-rhamnose isomerase (419 aa).

3 residues coordinate Mn(2+): His-262, Asp-294, and Asp-296.

This sequence belongs to the rhamnose isomerase family. Homotetramer. Mn(2+) is required as a cofactor.

It localises to the cytoplasm. It carries out the reaction L-rhamnopyranose = L-rhamnulose. The protein operates within carbohydrate degradation; L-rhamnose degradation; glycerone phosphate from L-rhamnose: step 1/3. Functionally, catalyzes the interconversion of L-rhamnose and L-rhamnulose. The protein is L-rhamnose isomerase of Escherichia coli O157:H7.